Reading from the N-terminus, the 391-residue chain is O-methyltransferase ATR12 (391 aa).

S-adenosyl-L-methionine contacts are provided by residues 233-234 (GG), Asp259, and 279-280 (DF). His299 acts as the Proton acceptor in catalysis.

The protein belongs to the class I-like SAM-binding methyltransferase superfamily. Cation-independent O-methyltransferase family. COMT subfamily.

The protein operates within mycotoxin biosynthesis. Functionally, O-methyltransferase; part of the core atranone cluster (CAC) which products are predicted to catalyze most or all steps of mycotoxin atranone synthesis, starting from geranylgeranyl pyrophosphate (GGPP). The initial cyclization of GGPP to dolabellane is probably performed by the terpene cyclase ATR13. The Baeyer-Villiger oxidation near the end of the atranone synthesis, which converts atranones D and E to atranones F and G is predicted to be catalyzed by the monooxygenase ATR8. Of the CAC's other predicted gene products, the reducing PKS ATR6 might synthesize a polyketide chain. This polyketide is probably transferred onto the atranone backbone by the polyketide transferase ATR5. Other predicted CAC products include 4 oxygenases (ATR2, ATR3, ATR4, and ATR14), 3 short-chain reductases (ATR7, ATR9, and ATR10), and a methyltransferase (ATR12). These may all be involved in the various steps of atranone biosynthesis, although their specific roles must await experimental determination. This chain is O-methyltransferase ATR12, found in Stachybotrys chlorohalonatus (strain IBT 40285).